Consider the following 86-residue polypeptide: Small ribosomal subunit protein uS17 (86 aa).

This sequence belongs to the universal ribosomal protein uS17 family. In terms of assembly, part of the 30S ribosomal subunit.

Its function is as follows. One of the primary rRNA binding proteins, it binds specifically to the 5'-end of 16S ribosomal RNA. The polypeptide is Small ribosomal subunit protein uS17 (Streptococcus pyogenes serotype M6 (strain ATCC BAA-946 / MGAS10394)).